Here is a 220-residue protein sequence, read N- to C-terminus: 1-Cys peroxiredoxin B (220 aa).

In terms of domain architecture, Thioredoxin spans Leu-4–Thr-165. Catalysis depends on Cys-46, which acts as the Cysteine sulfenic acid (-SOH) intermediate. Residues Lys-195–Gln-218 carry the Bipartite nuclear localization signal motif.

It belongs to the peroxiredoxin family. Prx6 subfamily.

The protein localises to the nucleus. Its subcellular location is the cytoplasm. It carries out the reaction a hydroperoxide + [thioredoxin]-dithiol = an alcohol + [thioredoxin]-disulfide + H2O. Functionally, thiol-specific peroxidase that catalyzes the reduction of hydrogen peroxide and organic hydroperoxides to water and alcohols, respectively. Seems to contribute to the inhibition of germination during stress. This is 1-Cys peroxiredoxin B from Oryza sativa subsp. indica (Rice).